A 540-amino-acid chain; its full sequence is Chaperonin GroEL (540 aa).

Residues 29 to 32 (TIGP), 86 to 90 (DGTTT), Gly413, 476 to 478 (NAA), and Asp492 each bind ATP. The interval 520 to 540 (DKPEPESNNQMPATPGMGGMM) is disordered.

This sequence belongs to the chaperonin (HSP60) family. In terms of assembly, forms a cylinder of 14 subunits composed of two heptameric rings stacked back-to-back. Interacts with the co-chaperonin GroES.

Its subcellular location is the cytoplasm. The enzyme catalyses ATP + H2O + a folded polypeptide = ADP + phosphate + an unfolded polypeptide.. In terms of biological role, together with its co-chaperonin GroES, plays an essential role in assisting protein folding. The GroEL-GroES system forms a nano-cage that allows encapsulation of the non-native substrate proteins and provides a physical environment optimized to promote and accelerate protein folding. The chain is Chaperonin GroEL from Ligilactobacillus salivarius (strain UCC118) (Lactobacillus salivarius).